The primary structure comprises 252 residues: MSLLTEVETYVLSIVPSGPLKAEIAQRLEDVFAGKNTDLEALMEWLKTRPILSPLTKGILGFVFTLTVPSERGLQRRRFVQNALNGNGDPNNMDRAVKLYRKLKREITFHGAKEVALSYSAGALASCMGLIYNRMGTVTTEVAFGLVCATCEQIADSQHRSHRQMVTTTNPLIRHENRMVLASTTAKAMEQMAGSSEQAAEAMEVASQARQMVQAMRTIGTHPSSSAGLKDDLIENLQAYQKRMGVQMQRFK.

The tract at residues 1–164 (MSLLTEVETY…ADSQHRSHRQ (164 aa)) is membrane-binding. A Nuclear localization signal motif is present at residues 101–105 (RKLKR). The tract at residues 165–252 (MVTTTNPLIR…RMGVQMQRFK (88 aa)) is RNP-binding.

Belongs to the influenza viruses Matrix protein M1 family. As to quaternary structure, homodimer and homomultimer. Interacts with NEP. Binds ribonucleocapsid by both interacting with genomic RNA and NP protein. May interact with HA and NA. Cannot bind NP without genomic RNA.

The protein localises to the virion membrane. It is found in the host nucleus. Its function is as follows. Plays critical roles in virus replication, from virus entry and uncoating to assembly and budding of the virus particle. M1 binding to ribonucleocapsids (RNPs) in nucleus seems to inhibit viral transcription. Interaction of viral NEP with M1-RNP is thought to promote nuclear export of the complex, which is targeted to the virion assembly site at the apical plasma membrane in polarized epithelial cells. Interactions with NA and HA may bring M1, a non-raft-associated protein, into lipid rafts. Forms a continuous shell on the inner side of the lipid bilayer in virion, where it binds the RNP. During virus entry into cell, the M2 ion channel acidifies the internal virion core, inducing M1 dissociation from the RNP. M1-free RNPs are transported to the nucleus, where viral transcription and replication can take place. Functionally, determines the virion's shape: spherical or filamentous. Clinical isolates of influenza are characterized by the presence of significant proportion of filamentous virions, whereas after multiple passage on eggs or cell culture, virions have only spherical morphology. Filamentous virions are thought to be important to infect neighboring cells, and spherical virions more suited to spread through aerosol between hosts organisms. The protein is Matrix protein 1 of Aves (Human).